Here is a 130-residue protein sequence, read N- to C-terminus: Small ribosomal subunit protein uS11c (130 aa).

It belongs to the universal ribosomal protein uS11 family. As to quaternary structure, part of the 30S ribosomal subunit.

Its subcellular location is the plastid. The protein resides in the chloroplast. This is Small ribosomal subunit protein uS11c from Trieres chinensis (Marine centric diatom).